We begin with the raw amino-acid sequence, 1407 residues long: DNA-directed RNA polymerase subunit beta' (1407 aa).

Residues C70, C72, C85, and C88 each contribute to the Zn(2+) site. The Mg(2+) site is built by D460, D462, and D464. Zn(2+) contacts are provided by C814, C888, C895, and C898. K972 is subject to N6-acetyllysine.

Belongs to the RNA polymerase beta' chain family. The RNAP catalytic core consists of 2 alpha, 1 beta, 1 beta' and 1 omega subunit. When a sigma factor is associated with the core the holoenzyme is formed, which can initiate transcription. It depends on Mg(2+) as a cofactor. Requires Zn(2+) as cofactor.

It carries out the reaction RNA(n) + a ribonucleoside 5'-triphosphate = RNA(n+1) + diphosphate. In terms of biological role, DNA-dependent RNA polymerase catalyzes the transcription of DNA into RNA using the four ribonucleoside triphosphates as substrates. In Shigella dysenteriae serotype 1 (strain Sd197), this protein is DNA-directed RNA polymerase subunit beta'.